The sequence spans 367 residues: Polygalacturonase (367 aa).

The signal sequence occupies residues 1–18 (MRTSFVTMLALGAAAVSA). Cysteine 34 and cysteine 49 are joined by a disulfide. PbH1 repeat units follow at residues 161–191 (ADRLTLDHITIDNSEGDAKGGHNTDAFDVGS), 192–213 (STFITISNANIKNQDDCLAINS), 214–234 (GSNIKFVGGTCSGGHGISIGS), 243–264 (VKDVTISDSTVINSDNGVRVKT), and 272–294 (VSGVTFSNIKLSNIAKYGIVIEQ). The active-site Proton donor is the aspartate 206. Cysteine 208 and cysteine 224 are disulfide-bonded. Histidine 228 is a catalytic residue. 2 N-linked (GlcNAc...) asparagine glycosylation sites follow: asparagine 318 and asparagine 336. Cystine bridges form between cysteine 334/cysteine 339 and cysteine 358/cysteine 367.

It belongs to the glycosyl hydrolase 28 family.

Its subcellular location is the secreted. The catalysed reaction is (1,4-alpha-D-galacturonosyl)n+m + H2O = (1,4-alpha-D-galacturonosyl)n + (1,4-alpha-D-galacturonosyl)m.. This chain is Polygalacturonase (PG1), found in Penicillium digitatum (Green mold).